A 214-amino-acid polypeptide reads, in one-letter code: Small ribosomal subunit protein uS5 (214 aa).

The 64-residue stretch at 54 to 117 (LKYEVVDIKV…RDAKMNIIPV (64 aa)) folds into the S5 DRBM domain.

This sequence belongs to the universal ribosomal protein uS5 family. As to quaternary structure, part of the 30S ribosomal subunit. Contacts protein S4.

Its function is as follows. With S4 and S12 plays an important role in translational accuracy. The polypeptide is Small ribosomal subunit protein uS5 (Saccharolobus solfataricus (strain ATCC 35092 / DSM 1617 / JCM 11322 / P2) (Sulfolobus solfataricus)).